The chain runs to 107 residues: Small ribosomal subunit protein uS17 (107 aa).

Belongs to the universal ribosomal protein uS17 family. As to quaternary structure, part of the 30S ribosomal subunit.

Its function is as follows. One of the primary rRNA binding proteins, it binds specifically to the 5'-end of 16S ribosomal RNA. This is Small ribosomal subunit protein uS17 from Aquifex aeolicus (strain VF5).